The chain runs to 702 residues: Ribosomal RNA large subunit methyltransferase K/L (702 aa).

The region spanning 43 to 154 (LIYQSLMWSR…KETASIALDL (112 aa)) is the THUMP domain.

It belongs to the methyltransferase superfamily. RlmKL family.

It localises to the cytoplasm. The catalysed reaction is guanosine(2445) in 23S rRNA + S-adenosyl-L-methionine = N(2)-methylguanosine(2445) in 23S rRNA + S-adenosyl-L-homocysteine + H(+). It carries out the reaction guanosine(2069) in 23S rRNA + S-adenosyl-L-methionine = N(2)-methylguanosine(2069) in 23S rRNA + S-adenosyl-L-homocysteine + H(+). In terms of biological role, specifically methylates the guanine in position 2445 (m2G2445) and the guanine in position 2069 (m7G2069) of 23S rRNA. This is Ribosomal RNA large subunit methyltransferase K/L from Salmonella typhi.